Reading from the N-terminus, the 708-residue chain is MEANHQRNDLGLVALTMLAQYHNISLNPEEIKHKFDLDGKGLSLTSWLLAAKSLALKAKHIKKEISRLHLVNLPALVWQDNGKHFLLVKVDTDNNRYLTYNLEQDAPQILSQDEFEACYQGQLILVTSRASVVGQLAKFDFTWFIPAVIKYRKIFLETLIVSIFLQIFALITPLFFQVVMDKVLVHRGFSTLNIITVALAIVIIFEIVLSGLRTYVFSHSTSRIDVELGAKLFRHLLSLPISYFENRRVGDTVARVRELDQIRNFLTGQALTSVLDLLFSFIFFAVMWYYSPKLTLVILGSLPFYILWSIFISPILRRRLDDKFARSADNQAFLVESVTAINMIKAMAVAPQMTDTWDKQLASYVSSSFRVTVLATIGQQGVQLIQKTVMVINLWLGAHLVISGDLSIGQLIAFNMLSGQVIAPVIRLAQLWQDFQQVGISVTRLGDVLNSPTEQYQGKLSLPEIKGDISFKNIRFRYKPDAPTILNNVNLEIRQGEVIGIVGRSGSGKSTLTKLLQRFYIPENGQVLIDGHDLALADPNWLRRQIGVVLQDNVLLNRSIRENIALSDPGMPMERVIYAAKLAGAHDFISELREGYNTIVGEQGAGLSGGQRQRIAIARALVNNPKILIFDEATSALDYESEHIIMQNMQKICQGRTVILIAHRLSTVKNADRIIVMEKGEIVEQGKHHELLQNSNGLYSYLHQLQLN.

The Peptidase C39 domain maps to 1 to 126 (MEANHQRNDL…ACYQGQLILV (126 aa)). In terms of domain architecture, ABC transmembrane type-1 spans 155–437 (FLETLIVSIF…LAQLWQDFQQ (283 aa)). 5 helical membrane passes run 159–179 (LIVSIFLQIFALITPLFFQVV), 192–212 (LNIITVALAIVIIFEIVLSGL), 270–290 (ALTSVLDLLFSFIFFAVMWYY), 296–316 (LVILGSLPFYILWSIFISPIL), and 389–409 (VMVINLWLGAHLVISGDLSIG). One can recognise an ABC transporter domain in the interval 469–704 (ISFKNIRFRY…SNGLYSYLHQ (236 aa)). Residue 503–510 (GRSGSGKS) coordinates ATP.

This sequence belongs to the ABC transporter superfamily. Protein-1 exporter (TC 3.A.1.109) family. Homodimer.

It localises to the cell inner membrane. The catalysed reaction is ATP + H2O + proteinSide 1 = ADP + phosphate + proteinSide 2.. Part of the ABC transporter complex LktBD involved in leukotoxin export. Transmembrane domains (TMD) form a pore in the inner membrane and the ATP-binding domain (NBD) is responsible for energy generation. The polypeptide is Leukotoxin translocation ATP-binding protein LktB (lktB) (Bibersteinia trehalosi (Pasteurella trehalosi)).